The sequence spans 235 residues: Serine protease SplA (235 aa).

The N-terminal stretch at 1-35 is a signal peptide; sequence MNKNVMVKGLTALTILTSLGFAENISNQPHSIAKA. Active-site charge relay system residues include histidine 74, aspartate 113, and serine 189.

It belongs to the peptidase S1B family.

It localises to the secreted. The polypeptide is Serine protease SplA (splA) (Staphylococcus aureus (strain Mu3 / ATCC 700698)).